Here is a 383-residue protein sequence, read N- to C-terminus: uncharacterized protein (383 aa).

The segment at 1-55 is disordered; it reads MSSKLTVNAHYSPLKDEDPLDHIDSQTALDSMETDSTGKSSLYFSKSDDPLSKDI. Residues 13 to 24 are compositionally biased toward basic and acidic residues; sequence PLKDEDPLDHID. Over residues 25-44 the composition is skewed to polar residues; it reads SQTALDSMETDSTGKSSLYF. Over residues 46-55 the composition is skewed to basic and acidic residues; that stretch reads KSDDPLSKDI. Helical transmembrane passes span 87 to 107, 112 to 132, 157 to 177, 179 to 199, 205 to 225, 228 to 248, 262 to 282, 299 to 319, 329 to 349, and 352 to 372; these read LTIFFAVSSQIVFAILVTILN, NIINAPLLMLSFQMAFTSLMV, FIFVKILGIVSKTYCLAFVPV, FYQISRGLLLPFTILLSFVLL, LFPFGGCLLVMLGFGFGVRFE, VAPIGIILGVWSSFTTAIESV, LIYIFSALMSVFCLLLSVASL, FFIVLILSSLSNFYLNIATFT, YMISVSARSILQTLLAVAFLG, and LYGNRIYGVILILVGTLLYTL.

Belongs to the TPT transporter family.

The protein localises to the membrane. This is an uncharacterized protein from Schizosaccharomyces pombe (strain 972 / ATCC 24843) (Fission yeast).